The sequence spans 225 residues: Uridylate kinase (225 aa).

9–10 (GS) provides a ligand contact to ATP. Gly-44 contributes to the UMP binding site. ATP contacts are provided by Gly-45 and Arg-49. Residues Asp-66 and 114 to 120 (THPGHTT) each bind UMP. 4 residues coordinate ATP: Thr-140, Asn-141, Tyr-146, and Asp-149.

It belongs to the UMP kinase family. In terms of assembly, homohexamer.

It localises to the cytoplasm. The catalysed reaction is UMP + ATP = UDP + ADP. Its pathway is pyrimidine metabolism; CTP biosynthesis via de novo pathway; UDP from UMP (UMPK route): step 1/1. Inhibited by UTP. Catalyzes the reversible phosphorylation of UMP to UDP. The sequence is that of Uridylate kinase from Thermococcus kodakarensis (strain ATCC BAA-918 / JCM 12380 / KOD1) (Pyrococcus kodakaraensis (strain KOD1)).